The primary structure comprises 281 residues: 3-mercaptopyruvate sulfurtransferase (281 aa).

Rhodanese domains are found at residues Asp17–Glu135 and His165–Glu278. Arg179 contacts substrate. Catalysis depends on Cys238, which acts as the Cysteine persulfide intermediate. Residues Cys238–Ala244 are substrate specificity.

It localises to the cytoplasm. It carries out the reaction 2-oxo-3-sulfanylpropanoate + [thioredoxin]-dithiol = [thioredoxin]-disulfide + hydrogen sulfide + pyruvate + H(+). Catalyzes the transfer of sulfur from 3-mercaptopyruvate to a thiol-containing acceptor to form an intramolecular disulfide releasing hydrogen sulfide and pyruvate. The protein is 3-mercaptopyruvate sulfurtransferase (sseA) of Escherichia coli O157:H7.